Reading from the N-terminus, the 382-residue chain is POU domain, class 3, transcription factor 2-A (382 aa).

Disordered stretches follow at residues 69–136 (PWAT…SSNG), 150–206 (GMIN…TPTS), and 348–382 (EKRMTPPGGTIPGAEDIYGASRDTPPHLGVQTSVQ). The span at 122–136 (STGSTHLSSMASSNG) shows a compositional bias: polar residues. The span at 165–178 (LRDSHDDHHGDHGH) shows a compositional bias: basic and acidic residues. Residues 179 to 194 (QQVSQAQQQHSQLQGG) show a composition bias toward low complexity. One can recognise a POU-specific domain in the interval 201 to 275 (EDTPTSDDLE…LLNKWLEEAD (75 aa)). Positions 293 to 352 (KRKKRTSIEVSVKGALESHFLKCPKPSAPEITSLADSLQLEKEVVRVWFCNRRQKEKRMT) form a DNA-binding region, homeobox.

This sequence belongs to the POU transcription factor family. Class-3 subfamily. As to expression, expressed in the developing brain and spinal cord. Also found in a restricted region of the auditory vesicle during development. In the adult, expression is restricted to the brain.

The protein localises to the nucleus. Transcription factor that may be implicated in patterning of the central nervous system during early development. The sequence is that of POU domain, class 3, transcription factor 2-A (pou3f2-a) from Xenopus laevis (African clawed frog).